We begin with the raw amino-acid sequence, 137 residues long: MQVKTLLGATFLALSLASCSTVEKVVYRIDVPQGNYLEATTVAQVKEGMTAQQVQYLLGTPVLVDPYNSQTWYYVFLQQRAYETPVQHTFTVKFDQRGIVTETHLDKPLPQVSQQGENNTIIETGEKPKSSWWKFWK.

A signal peptide spans Met1–Ser18. The N-palmitoyl cysteine moiety is linked to residue Cys19. Residue Cys19 is the site of S-diacylglycerol cysteine attachment.

The protein belongs to the BamE family. In terms of assembly, part of the Bam complex.

The protein resides in the cell outer membrane. Functionally, part of the outer membrane protein assembly complex, which is involved in assembly and insertion of beta-barrel proteins into the outer membrane. This Haemophilus influenzae (strain ATCC 51907 / DSM 11121 / KW20 / Rd) protein is Outer membrane protein assembly factor BamE.